Here is a 377-residue protein sequence, read N- to C-terminus: Probable glucokinase 2 (377 aa).

27-32 (CDVGGS) provides a ligand contact to ATP.

This sequence belongs to the bacterial glucokinase family.

It catalyses the reaction D-glucose + ATP = D-glucose 6-phosphate + ADP + H(+). The polypeptide is Probable glucokinase 2 (GK2) (Trichomonas vaginalis).